The sequence spans 716 residues: Polyribonucleotide nucleotidyltransferase (716 aa).

2 residues coordinate Mg(2+): Asp-493 and Asp-499. In terms of domain architecture, KH spans 560-619 (PRMITIKINPEKIRDVIGKGGSVIRALTEETGTTIDISDDGVVTIASTSSEGMAEAKKRI). Residues 629-697 (GQVYEGTVLK…EKGRVRLSAK (69 aa)) enclose the S1 motif domain.

Belongs to the polyribonucleotide nucleotidyltransferase family. It depends on Mg(2+) as a cofactor.

The protein resides in the cytoplasm. The enzyme catalyses RNA(n+1) + phosphate = RNA(n) + a ribonucleoside 5'-diphosphate. Its function is as follows. Involved in mRNA degradation. Catalyzes the phosphorolysis of single-stranded polyribonucleotides processively in the 3'- to 5'-direction. The chain is Polyribonucleotide nucleotidyltransferase from Paraburkholderia xenovorans (strain LB400).